The chain runs to 598 residues: DNA ligase (598 aa).

D258 provides a ligand contact to ATP. Catalysis depends on K260, which acts as the N6-AMP-lysine intermediate. Residues R265, R280, E310, F350, R427, and K433 each contribute to the ATP site.

It belongs to the ATP-dependent DNA ligase family. Requires Mg(2+) as cofactor.

The enzyme catalyses ATP + (deoxyribonucleotide)n-3'-hydroxyl + 5'-phospho-(deoxyribonucleotide)m = (deoxyribonucleotide)n+m + AMP + diphosphate.. In terms of biological role, DNA ligase that seals nicks in double-stranded DNA during DNA replication, DNA recombination and DNA repair. The protein is DNA ligase of Sulfolobus acidocaldarius (strain ATCC 33909 / DSM 639 / JCM 8929 / NBRC 15157 / NCIMB 11770).